A 458-amino-acid polypeptide reads, in one-letter code: Glycine--tRNA ligase (458 aa).

2 residues coordinate substrate: R97 and E171. ATP contacts are provided by residues 203–205 (RNE), 213–218 (FRTREF), 287–288 (EL), and 331–334 (GADR). 218 to 222 (FEQME) contacts substrate. 327–331 (EPSLG) is a binding site for substrate.

It belongs to the class-II aminoacyl-tRNA synthetase family. As to quaternary structure, homodimer.

The protein resides in the cytoplasm. It carries out the reaction tRNA(Gly) + glycine + ATP = glycyl-tRNA(Gly) + AMP + diphosphate. Its function is as follows. Catalyzes the attachment of glycine to tRNA(Gly). The chain is Glycine--tRNA ligase from Bacillus thuringiensis subsp. konkukian (strain 97-27).